The following is a 360-amino-acid chain: MRKKMLASLQWRAIRMTTGISLLLFVCLISFMMFYYRLDPLVLLSSSWFGIPFILILLLISVTVGFASGYMYGNRLKTRIDTLIESILTFENGNFAYRIPPLGDDEIGLAADQLNEMAKRVELQVASLQKLSNERAEWQAQMKKSVISEERQRLARDLHDAVSQQLFAISMMTSAVLEHVKDADDKTVKRIRMVEHMAGEAQNEMRALLLHLRPVTLEGKGLKEGLTELLDEFRKKQPIDIEWDIQDTAISKGVEDHLFRIVQEALSNVFRHSKASKVTVILGIKNSQLRLKVIDNGKGFKMDQVKASSYGLNSMKERASEIGGVAEVISVEGKGTQIEVKVPIFPEEKGENERDSSIID.

Topologically, residues 1–15 (MRKKMLASLQWRAIR) are cytoplasmic. The helical transmembrane segment at 16-36 (MTTGISLLLFVCLISFMMFYY) threads the bilayer. Topologically, residues 37-47 (RLDPLVLLSSS) are extracellular. A helical transmembrane segment spans residues 48–68 (WFGIPFILILLLISVTVGFAS). Topologically, residues 69 to 360 (GYMYGNRLKT…ENERDSSIID (292 aa)) are cytoplasmic. Residues 74–126 (NRLKTRIDTLIESILTFENGNFAYRIPPLGDDEIGLAADQLNEMAKRVELQVA) form the HAMP domain. The Histidine kinase domain occupies 153 to 346 (RLARDLHDAV…QIEVKVPIFP (194 aa)). H159 is modified (phosphohistidine; by autocatalysis).

The protein resides in the cell membrane. It carries out the reaction ATP + protein L-histidine = ADP + protein N-phospho-L-histidine.. Its function is as follows. Member of the two-component regulatory system LiaS/LiaR probably involved in response to a subset of cell wall-active antibiotics that interfere with the lipid II cycle in the cytoplasmic membrane (bacitracin, nisin, ramoplanin and vancomycin). Also seems to be involved in response to cationic antimicrobial peptides and secretion stress. Activates probably LiaR by phosphorylation. The sequence is that of Sensor histidine kinase LiaS (liaS) from Bacillus subtilis (strain 168).